The primary structure comprises 348 residues: Protein RecA (348 aa).

An ATP-binding site is contributed by 65–72; it reads GPESSGKT. Residues 328-348 form a disordered region; the sequence is SKPQAETSARLATQEELADDY.

This sequence belongs to the RecA family.

Its subcellular location is the cytoplasm. Its function is as follows. Can catalyze the hydrolysis of ATP in the presence of single-stranded DNA, the ATP-dependent uptake of single-stranded DNA by duplex DNA, and the ATP-dependent hybridization of homologous single-stranded DNAs. It interacts with LexA causing its activation and leading to its autocatalytic cleavage. This Ectopseudomonas oleovorans (Pseudomonas oleovorans) protein is Protein RecA.